A 212-amino-acid chain; its full sequence is Ribosomal RNA small subunit methyltransferase G (212 aa).

Residues glycine 72, leucine 77, 123-124 (VE), and arginine 138 contribute to the S-adenosyl-L-methionine site.

Belongs to the methyltransferase superfamily. RNA methyltransferase RsmG family.

The protein localises to the cytoplasm. The enzyme catalyses guanosine(527) in 16S rRNA + S-adenosyl-L-methionine = N(7)-methylguanosine(527) in 16S rRNA + S-adenosyl-L-homocysteine. Its function is as follows. Specifically methylates the N7 position of guanine in position 527 of 16S rRNA. This chain is Ribosomal RNA small subunit methyltransferase G, found in Histophilus somni (strain 129Pt) (Haemophilus somnus).